A 189-amino-acid chain; its full sequence is Peptidyl-tRNA hydrolase (189 aa).

Tyr15 lines the tRNA pocket. Catalysis depends on His20, which acts as the Proton acceptor. Phe66, Asn68, and Asn114 together coordinate tRNA.

It belongs to the PTH family. Monomer.

It localises to the cytoplasm. The catalysed reaction is an N-acyl-L-alpha-aminoacyl-tRNA + H2O = an N-acyl-L-amino acid + a tRNA + H(+). Hydrolyzes ribosome-free peptidyl-tRNAs (with 1 or more amino acids incorporated), which drop off the ribosome during protein synthesis, or as a result of ribosome stalling. Its function is as follows. Catalyzes the release of premature peptidyl moieties from peptidyl-tRNA molecules trapped in stalled 50S ribosomal subunits, and thus maintains levels of free tRNAs and 50S ribosomes. The polypeptide is Peptidyl-tRNA hydrolase (Streptococcus gordonii (strain Challis / ATCC 35105 / BCRC 15272 / CH1 / DL1 / V288)).